The following is a 269-amino-acid chain: MLEEINYDTKLFGLIGKNIKYTLSPYIHNFSFTTLGINAVYLVFDLDEMKFNRIINGLLEIAEGLNVTIPYKEEVMKYLDNTDTYSTRIQAVNTIYKKGGYNTDYLAIKNLVRKKIGNMSGYECYVYGAGGAAKAAAFALSELGCSSISIVNRTNLRANELVELLNKNGYNASIKENCNSTSNIVVVNSTPNPSVVPENCIQKSELVIEFVYKPVETELIKNAKKYSIKYIDGLEILVNQAVEAEKIWFNKSVSDEKIIEYLYARKLVW.

Shikimate is bound by residues 22–24 (TLS) and Thr-68. Lys-72 functions as the Proton acceptor in the catalytic mechanism. Residues Asn-93 and Asp-104 each contribute to the shikimate site. NADP(+)-binding positions include 128–132 (GAGGA), 152–157 (NRTNLR), and Phe-210. Tyr-212 lines the shikimate pocket. NADP(+) is bound at residue Gly-233.

It belongs to the shikimate dehydrogenase family. In terms of assembly, homodimer.

The enzyme catalyses shikimate + NADP(+) = 3-dehydroshikimate + NADPH + H(+). The protein operates within metabolic intermediate biosynthesis; chorismate biosynthesis; chorismate from D-erythrose 4-phosphate and phosphoenolpyruvate: step 4/7. In terms of biological role, involved in the biosynthesis of the chorismate, which leads to the biosynthesis of aromatic amino acids. Catalyzes the reversible NADPH linked reduction of 3-dehydroshikimate (DHSA) to yield shikimate (SA). The polypeptide is Shikimate dehydrogenase (NADP(+)) (Saccharolobus islandicus (strain Y.N.15.51 / Yellowstone #2) (Sulfolobus islandicus)).